Here is a 352-residue protein sequence, read N- to C-terminus: B1 bradykinin receptor (352 aa).

The Extracellular segment spans residues 1 to 41 (MASWPPLQLQSSNQSQLFPQNATACDNAPEAWDLLHRVLPT). Residues N13 and N21 are each glycosylated (N-linked (GlcNAc...) asparagine). Residues 42-62 (FIISICSFGLLGNLFVLLVFL) traverse the membrane as a helical segment. Residues 63-72 (LPRRRLNVAE) are Cytoplasmic-facing. A helical membrane pass occupies residues 73 to 93 (IYLANLAASDLVFVLGLPFWA). At 94 to 110 (ENIWNQFNWPFGALLCR) the chain is on the extracellular side. Cysteines 109 and 188 form a disulfide. The helical transmembrane segment at 111–131 (VINGIIKANLFISIFLVVAIS) threads the bilayer. The Cytoplasmic portion of the chain corresponds to 132–153 (QDRYCVLVHPMASRRRQRRRQA). A helical transmembrane segment spans residues 154-174 (RVTCVLIWVVGGLLSIPTFLL). The Extracellular segment spans residues 175–206 (RSIQAVPDLNITACILLLPHEAWHFARIVELN). N184 carries an N-linked (GlcNAc...) asparagine glycan. Residues 207-227 (ILAFLLPLAAIIFFNYHILAS) form a helical membrane-spanning segment. The Cytoplasmic segment spans residues 228–250 (LRGREEVSRTRCGGSKDSKTTAL). Residues 251-271 (ILTLVVAFLVCWAPYHFFAFL) form a helical membrane-spanning segment. Topologically, residues 272-294 (EFLFQVQAVRGCFWEDFIDLGLQ) are extracellular. A helical transmembrane segment spans residues 295 to 315 (LANFLAFTNSSLNPVIYVFAG). Over 316–352 (RLFRTKVWELYKQCTPKSLAPISSSHRKEIFQLFWRN) the chain is Cytoplasmic. C329 carries S-palmitoyl cysteine lipidation.

This sequence belongs to the G-protein coupled receptor 1 family. Bradykinin receptor subfamily. BDKRB1 sub-subfamily.

The protein resides in the cell membrane. In terms of biological role, this is a receptor for bradykinin. Could be a factor in chronic pain and inflammation. The protein is B1 bradykinin receptor (BDKRB1) of Macaca fascicularis (Crab-eating macaque).